The chain runs to 496 residues: L-arabinose isomerase (496 aa).

Mn(2+)-binding residues include glutamate 306, glutamate 331, histidine 348, and histidine 447.

Belongs to the arabinose isomerase family. Mn(2+) is required as a cofactor.

The enzyme catalyses beta-L-arabinopyranose = L-ribulose. It participates in carbohydrate degradation; L-arabinose degradation via L-ribulose; D-xylulose 5-phosphate from L-arabinose (bacterial route): step 1/3. Catalyzes the conversion of L-arabinose to L-ribulose. The chain is L-arabinose isomerase from Geobacillus kaustophilus (strain HTA426).